A 90-amino-acid polypeptide reads, in one-letter code: Molybdopterin synthase sulfur carrier subunit (90 aa).

A 1-thioglycine; alternate modification is found at Gly90. Gly90 is modified (glycyl adenylate; alternate).

This sequence belongs to the MoaD family. MOCS2A subfamily. As to quaternary structure, heterotetramer; composed of 2 small (Mocs2A) and 2 large (Mocs2B) subunits. C-terminal thiocarboxylation occurs in 2 steps, it is first acyl-adenylated (-COAMP) via the hesA/moeB/thiF part of MOCS3, then thiocarboxylated (-COSH) via the rhodanese domain of MOCS3.

It localises to the cytoplasm. It functions in the pathway cofactor biosynthesis; molybdopterin biosynthesis. In terms of biological role, acts as a sulfur carrier required for molybdopterin biosynthesis. Component of the molybdopterin synthase complex that catalyzes the conversion of precursor Z into molybdopterin by mediating the incorporation of 2 sulfur atoms into precursor Z to generate a dithiolene group. In the complex, serves as sulfur donor by being thiocarboxylated (-COSH) at its C-terminus by MOCS3. After interaction with Mocs2B, the sulfur is then transferred to precursor Z to form molybdopterin. The chain is Molybdopterin synthase sulfur carrier subunit from Drosophila simulans (Fruit fly).